The following is a 512-amino-acid chain: Circadian clock oscillator protein KaiC (512 aa).

2 consecutive KaiC domains span residues 1-243 (MQFP…ISIF) and 257-512 (VRVS…SSED). Residues Gly-45, Thr-46, Gly-47, Lys-48, Thr-49, Ser-85, Lys-220, Leu-221, Arg-222, Thr-224, His-226, Thr-286, Gly-287, Thr-288, Gly-289, Lys-290, Thr-291, and Leu-292 each contribute to the ATP site. Residue Thr-49 participates in Mg(2+) binding. Thr-291 is a binding site for Mg(2+). Glu-314 lines the Mg(2+) pocket. Trp-327 provides a ligand contact to ATP. Ser-427 carries the post-translational modification Phosphoserine; by autocatalysis. A Phosphothreonine; by autocatalysis modification is found at Thr-428. ATP is bound by residues Arg-447, Lys-453, Met-454, Arg-455, Ser-457, His-459, and Lys-461.

The protein belongs to the KaiC family. In terms of assembly, homohexamer; hexamerization is dependent on ATP-binding. The KaiABC complex composition changes during the circadian cycle to control KaiC phosphorylation. Complexes KaiC(6), KaiA(2-4):KaiC(6), KaiB(6):KaiC(6) and KaiC(6):KaiB(6):KaiA(12) are among the most important forms, many form cooperatively. KaiC interacts with SasA, activating its autokinase function and leading to RpaA activation. Requires Mg(2+) as cofactor. Phosphorylated on serine and threonine residues by autocatalysis. Has a 4 step phosphorylation cycle; the autokinase acts first on Thr-428, then Ser-427. When Ser-427 is modified KaiC switches to an autophosphatase mode, acting first on phospho-Thr-428 then phospho-Ser-427.

It carries out the reaction L-seryl-[protein] + ATP = O-phospho-L-seryl-[protein] + ADP + H(+). The enzyme catalyses L-threonyl-[protein] + ATP = O-phospho-L-threonyl-[protein] + ADP + H(+). It catalyses the reaction ATP + H2O = ADP + phosphate + H(+). The interaction with KaiA enhances its phosphorylation status, while the interaction with KaiB decreases it. Its function is as follows. Central component of the KaiABC oscillator complex, which constitutes the main circadian regulator in cyanobacteria. Complex composition changes during the circadian cycle to control KaiC phosphorylation. KaiA stimulates KaiC autophosphorylation, while KaiB sequesters KaiA, leading to KaiC autodephosphorylation. Clock output pathways impact the RpaA transcriptional regulator. KaiC enhances the autophosphorylation activity of SasA, which then transfers its phosphate group to RpaA to activate it. KaiB and KaiC together enhance the phospho-RpaA dephosphatase activity of CikA. Functionally, has a weak, temperature-independent ATPase activity; ATPase activity defines the circadian period. The phosphorylation state of KaiC modulates its ATPase activity and effects KaiB binding. The sequence is that of Circadian clock oscillator protein KaiC from Parasynechococcus marenigrum (strain WH8102).